A 299-amino-acid polypeptide reads, in one-letter code: Probable arylamine N-acetyltransferase 2 (299 aa).

Cys-75 functions as the Acyl-thioester intermediate in the catalytic mechanism. Residues His-115 and Asp-130 contribute to the active site.

It belongs to the arylamine N-acetyltransferase family.

It carries out the reaction an arylamine + acetyl-CoA = an N-acetylarylamine + CoA. This chain is Probable arylamine N-acetyltransferase 2, found in Dictyostelium discoideum (Social amoeba).